The primary structure comprises 819 residues: Protein kinase C-binding protein NELL2 (819 aa).

Positions 1–24 are cleaved as a signal peptide; that stretch reads MHAMESRVLLRTFCVILGLGAVWG. N-linked (GlcNAc...) asparagine glycosylation is found at Asn56, Asn228, Asn296, and Asn301. The 165-residue stretch at 67–231 folds into the Laminin G-like domain; that stretch reads PRSIKASTAT…AQCPDLNRTC (165 aa). The 60-residue stretch at 275–334 folds into the VWFC 1 domain; it reads RTCTVKGTTYRESESWTDGCKNCTCLNGTIQCETLVCPAPDCPPKSAPAYVDGKCCKECK. The EGF-like 1 domain occupies 400–442; that stretch reads GYDFCSEKHTCMENSVCRNLNDRAVCSCRDGFRALREDNAYCE. Disulfide bonds link Cys404–Cys416, Cys410–Cys425, and Cys427–Cys441. Asp443, Ile444, and Glu446 together coordinate Ca(2+). Residues 443 to 484 form the EGF-like 2; calcium-binding domain; it reads DIDECAEGRHYCRENTMCVNTPGSFMCICKTGYIRIDDYSCT. 9 cysteine pairs are disulfide-bonded: Cys447/Cys460, Cys454/Cys469, Cys471/Cys483, Cys489/Cys502, Cys496/Cys511, Cys513/Cys524, Cys528/Cys538, Cys532/Cys544, and Cys546/Cys555. Residues Asn462, Thr463, and Ser466 each coordinate Ca(2+). An EGF-like 3; calcium-binding domain is found at 485-525; that stretch reads EHDECLTNQHNCDENALCFNTVGGHNCVCKPGYTGNGTTCK. A glycan (N-linked (GlcNAc...) asparagine) is linked at Asn520. One can recognise an EGF-like 4 domain in the interval 526–556; sequence AFCKDGCRNGGACIAANVCACPQGFTGPSCE. The O-linked (GlcNAc...) threonine glycan is linked to Thr551. Asp558, Ile559, and Glu561 together coordinate Ca(2+). Residues 558-604 form the EGF-like 5; calcium-binding domain; that stretch reads DIDECSEGFVQCDSRANCINLPGWYHCECRDGYHDNGMFAPGGESCE. Cystine bridges form between Cys562–Cys575, Cys569–Cys584, and Cys586–Cys603. Asn577, Leu578, and Trp581 together coordinate Ca(2+). Residues Asp605, Ile606, and Glu608 each coordinate Ca(2+). The 36-residue stretch at 605-640 folds into the EGF-like 6; calcium-binding domain; it reads DIDECGTGRHSCTNDTICFNLDGGYDCRCPHGKNCT. 3 disulfide bridges follow: Cys609–Cys622, Cys616–Cys631, and Cys633–Cys639. A glycan (N-linked (GlcNAc...) asparagine) is linked at Asn618. Residues Asn624, Leu625, and Gly628 each coordinate Ca(2+). A glycan (N-linked (GlcNAc...) asparagine) is linked at Asn638. Residues 701-759 form the VWFC 2 domain; the sequence is SQCLHQNGETVYNSGDTWVQDCRQCRCLQGEVDCWPLACPEVECEFSVLPENECCPRCV.

In terms of assembly, homotrimer. Interacts with NICOL1; this interaction triggers epididymal differentiation. Interacts (via EGF domains) with ROBO3 (via FN domains); binding to ROBO3 induces repulsive guidance cue for commissural axons. In terms of tissue distribution, expressed in brain and testis but not in epididymis. Expressed in regions flanking the commissural axon trajectory, including the ventral horn.

The protein localises to the secreted. Its function is as follows. Plays multiple roles in neural tissues, regulates neuronal proliferation, survival, differentiation, polarization, as well as axon guidance and synaptic functions. Plays an important role in axon development during neuronal differentiation through the MAPK intracellular signaling pathway. Via binding to its receptor ROBO3, plays a role in axon guidance, functioning as a repulsive axon guidance cue that contributes to commissural axon guidance to the midline. Required for neuron survival through the modulation of MAPK signaling pathways too. Involved in the regulation of hypothalamic GNRH secretion and the control of puberty. In terms of biological role, epididymal-secreted protein that signals through a ROS1-pathway to regulate the epididymal initial segment (IS) maturation, sperm maturation and male fertility. This chain is Protein kinase C-binding protein NELL2, found in Mus musculus (Mouse).